We begin with the raw amino-acid sequence, 360 residues long: Phospho-N-acetylmuramoyl-pentapeptide-transferase (360 aa).

The next 10 helical transmembrane spans lie at 21–41, 73–93, 98–118, 132–152, 168–188, 199–219, 236–256, 263–283, 288–308, and 338–358; these read YITF…LWIG, TMGG…WADL, VWFV…DDYW, WKYF…YAVG, FMPQ…VGTS, GLAI…AWAT, AGEL…FLWY, VFMG…IAVL, LLLV…ILQV, and VIVR…VTLK.

The protein belongs to the glycosyltransferase 4 family. MraY subfamily. Requires Mg(2+) as cofactor.

The protein resides in the cell inner membrane. It carries out the reaction UDP-N-acetyl-alpha-D-muramoyl-L-alanyl-gamma-D-glutamyl-meso-2,6-diaminopimeloyl-D-alanyl-D-alanine + di-trans,octa-cis-undecaprenyl phosphate = di-trans,octa-cis-undecaprenyl diphospho-N-acetyl-alpha-D-muramoyl-L-alanyl-D-glutamyl-meso-2,6-diaminopimeloyl-D-alanyl-D-alanine + UMP. It functions in the pathway cell wall biogenesis; peptidoglycan biosynthesis. In terms of biological role, catalyzes the initial step of the lipid cycle reactions in the biosynthesis of the cell wall peptidoglycan: transfers peptidoglycan precursor phospho-MurNAc-pentapeptide from UDP-MurNAc-pentapeptide onto the lipid carrier undecaprenyl phosphate, yielding undecaprenyl-pyrophosphoryl-MurNAc-pentapeptide, known as lipid I. In Actinobacillus pleuropneumoniae serotype 3 (strain JL03), this protein is Phospho-N-acetylmuramoyl-pentapeptide-transferase.